The primary structure comprises 283 residues: Coiled-coil domain-containing protein 107 (283 aa).

The first 24 residues, 1-24, serve as a signal peptide directing secretion; the sequence is MAGAVSLLGVVGLLLVSALSGVLG. Positions 30–62 are disordered; that stretch reads DLRAHPGNAAHPGSGATEPRRRPPLKDQRERTR. Basic and acidic residues predominate over residues 47–62; it reads EPRRRPPLKDQRERTR. The helical transmembrane segment at 65–85 threads the bilayer; it reads SLPLGALYTAAVAAFVLYKCL. Positions 104–134 form a coiled coil; it reads LQSEQQLAQLTQQLAQTEQHLNNLMAQLDPL. Disordered stretches follow at residues 164-207 and 258-283; these read KPDK…SRPL and AKGPSHSLGWEGGTTAEGRLKQSLFS. Residues 176–187 show a composition bias toward gly residues; that stretch reads EGSGGESAGGGD.

It is found in the membrane. The protein is Coiled-coil domain-containing protein 107 (CCDC107) of Homo sapiens (Human).